Reading from the N-terminus, the 258-residue chain is Synaptosomal-associated protein 29 (258 aa).

Residues 1-41 (MSAYPKSYNPFDDDGEDEGARPAPWRDARDLPDGPDAPADR) are disordered. Positions 18 to 32 (EGARPAPWRDARDLP) are enriched in basic and acidic residues. A coiled-coil region spans residues 76 to 107 (ASSEELARQRGVLERTEKMVDKMDQDLKISQK). A phosphoserine mark is found at serine 77, serine 78, and serine 114. The disordered stretch occupies residues 127 to 190 (PVETPPEQNG…GSAVSTDAYP (64 aa)). Phosphothreonine is present on residues threonine 130 and threonine 137. Residues 132–144 (PEQNGTLASQPNS) are compositionally biased toward polar residues. 5 positions are modified to phosphoserine: serine 163, serine 182, serine 185, serine 204, and serine 210. One can recognise a t-SNARE coiled-coil homology domain in the interval 196 to 258 (QAYHQKIDSN…KSTERKVRQL (63 aa)).

It belongs to the SNAP-25 family. In terms of assembly, forms a SNARE complex, composed of VAMP8, SNAP29 and STX17, involved in fusion of autophagosome with lysosome. Interacts with multiple syntaxins including STX6. Interacts with EIPR1. Interacts with STX17; this interaction is increased in the absence of TMEM39A.

The protein localises to the cytoplasm. It is found in the golgi apparatus membrane. It localises to the cytoplasmic vesicle. The protein resides in the autophagosome membrane. Its subcellular location is the cell projection. The protein localises to the cilium membrane. Functionally, SNAREs, soluble N-ethylmaleimide-sensitive factor-attachment protein receptors, are essential proteins for fusion of cellular membranes. SNAREs localized on opposing membranes assemble to form a trans-SNARE complex, an extended, parallel four alpha-helical bundle that drives membrane fusion. SNAP29 is a SNARE involved in autophagy through the direct control of autophagosome membrane fusion with the lysososome membrane. Also plays a role in ciliogenesis by regulating membrane fusions. The polypeptide is Synaptosomal-associated protein 29 (Pongo abelii (Sumatran orangutan)).